Consider the following 20-residue polypeptide: Peptide encoded by miPEP171b (20 aa).

Lateral root initiations.

Its function is as follows. Regulatory peptide encoded by the primary transcript (pri-miR171b) of the microRNA miR171b that enhances the accumulation of its corresponding mature miRNA. Acts probably as a transcriptional activator of its corresponding pri-miRNA. Has no effect on the accumulation of other miRNAs. Addition of synthetic miPEP171b increases the abundance of miR171b, with consequent reduction of lateral root formation. The polypeptide is Peptide encoded by miPEP171b (Medicago truncatula (Barrel medic)).